The primary structure comprises 440 residues: Golgi reassembly-stacking protein 1 (440 aa).

Glycine 2 is lipidated: N-myristoyl glycine. 2 PDZ GRASP-type domains span residues 15–105 and 111–199; these read EGFH…FCSF and QVWH…YGYL. Residues 15–215 form a GRASP region; sequence EGFHLHGVQE…PPSYHKKPPG (201 aa). Positions 18, 20, and 103 each coordinate Zn(2+). Positions 190–202 are essential for interaction with GOLGA2/GM130; it reads LGCGIGYGYLHRI. Disordered regions lie at residues 205 to 248, 261 to 301, and 327 to 440; these read QPPS…ETGS, PGSS…PVQR, and LPSS…STTE. Over residues 214–239 the composition is skewed to pro residues; the sequence is PGTPPPSALPLGAPPPDALPPGPTPE. Threonine 216 bears the Phosphothreonine mark. Over residues 327–336 the composition is skewed to low complexity; the sequence is LPSSTELTTT. Over residues 337-351 the composition is skewed to polar residues; sequence AVSTSGPEDICSSSS. 3 positions are modified to phosphoserine: serine 362, serine 364, and serine 373.

It belongs to the GORASP family. Homodimer. Forms higher-order oligomers under interphase but not mitotic conditions. Dimers of the protein on one membrane might be able to interact with dimers on another and so stack cisternae. Interacts with the C-terminus of GOLGA2/GM130 under both mitotic and non-mitotic conditions. The interaction is critical for the correct targeting of both proteins to the cis-Golgi. Interacts with TMED2 and TMED3. Post-translationally, phosphorylated by CDC2/B1 and PLK kinases during mitosis. Phosphorylation cycle correlates with the cisternal stacking cycle. Phosphorylation of the homodimer prevents the association of dimers into higher-order oligomers, leading to cisternal unstacking. In terms of processing, target for caspase-3 cleavage during apoptosis. The cleavage contributes to Golgi fragmentation and occurs very early in the execution phase of apoptosis. Myristoylated.

The protein resides in the golgi apparatus. The protein localises to the cis-Golgi network membrane. Its subcellular location is the endoplasmic reticulum-Golgi intermediate compartment membrane. Key structural protein of the Golgi apparatus. The membrane cisternae of the Golgi apparatus adhere to each other to form stacks, which are aligned side by side to form the Golgi ribbon. Acting in concert with GORASP2/GRASP55, is required for the formation and maintenance of the Golgi ribbon, and may be dispensable for the formation of stacks. However, other studies suggest that GORASP1 plays an important role in assembly and membrane stacking of the cisternae, and in the reassembly of Golgi stacks after breakdown during mitosis. Caspase-mediated cleavage of GORASP1 is required for fragmentation of the Golgi during apoptosis. Also mediates, via its interaction with GOLGA2/GM130, the docking of transport vesicles with the Golgi membranes. Mediates ER stress-induced unconventional (ER/Golgi-independent) trafficking of core-glycosylated CFTR to cell membrane. The protein is Golgi reassembly-stacking protein 1 (GORASP1) of Homo sapiens (Human).